The primary structure comprises 76 residues: uncharacterized protein (76 aa).

The next 3 membrane-spanning stretches (helical) occupy residues 1 to 21 (MTAI…HLQL), 35 to 55 (CFDI…LLII), and 56 to 76 (NNKF…NTMI).

It is found in the cell membrane. This is an uncharacterized protein from Borreliella burgdorferi (strain ATCC 35210 / DSM 4680 / CIP 102532 / B31) (Borrelia burgdorferi).